Reading from the N-terminus, the 603-residue chain is Probable L-gulonolactone oxidase 6 (603 aa).

The first 35 residues, 1–35, serve as a signal peptide directing secretion; the sequence is MAFTSSPSYGSLNAAFWRTIFVVHCISTLVFTTIS. In terms of domain architecture, FAD-binding PCMH-type spans 64–246; sequence STCRAANVAY…SQVTLKLQPM (183 aa).

It belongs to the oxygen-dependent FAD-linked oxidoreductase family. The cofactor is FAD.

It catalyses the reaction L-gulono-1,4-lactone + O2 = L-ascorbate + H2O2 + H(+). It participates in cofactor biosynthesis; L-ascorbate biosynthesis. May be involved in the biosynthesis of ascorbic acid. The sequence is that of Probable L-gulonolactone oxidase 6 from Arabidopsis thaliana (Mouse-ear cress).